We begin with the raw amino-acid sequence, 360 residues long: Aminomethyltransferase (360 aa).

The protein belongs to the GcvT family. In terms of assembly, the glycine cleavage system is composed of four proteins: P, T, L and H.

It carries out the reaction N(6)-[(R)-S(8)-aminomethyldihydrolipoyl]-L-lysyl-[protein] + (6S)-5,6,7,8-tetrahydrofolate = N(6)-[(R)-dihydrolipoyl]-L-lysyl-[protein] + (6R)-5,10-methylene-5,6,7,8-tetrahydrofolate + NH4(+). The glycine cleavage system catalyzes the degradation of glycine. The chain is Aminomethyltransferase from Pseudoalteromonas translucida (strain TAC 125).